We begin with the raw amino-acid sequence, 428 residues long: Enolase (428 aa).

Glutamine 163 is a binding site for (2R)-2-phosphoglycerate. The active-site Proton donor is glutamate 205. Mg(2+) is bound by residues aspartate 242, glutamate 285, and aspartate 312. (2R)-2-phosphoglycerate-binding residues include lysine 337, arginine 366, serine 367, and lysine 388. Lysine 337 (proton acceptor) is an active-site residue.

Belongs to the enolase family. Requires Mg(2+) as cofactor.

The protein localises to the cytoplasm. It is found in the secreted. The protein resides in the cell surface. It catalyses the reaction (2R)-2-phosphoglycerate = phosphoenolpyruvate + H2O. The protein operates within carbohydrate degradation; glycolysis; pyruvate from D-glyceraldehyde 3-phosphate: step 4/5. In terms of biological role, catalyzes the reversible conversion of 2-phosphoglycerate (2-PG) into phosphoenolpyruvate (PEP). It is essential for the degradation of carbohydrates via glycolysis. This chain is Enolase, found in Nitrosomonas europaea (strain ATCC 19718 / CIP 103999 / KCTC 2705 / NBRC 14298).